Here is a 495-residue protein sequence, read N- to C-terminus: Maintenance of mitochondrial morphology protein 1 (495 aa).

Over 1–22 the chain is Lumenal; the sequence is MALQQHEPAPFAPQSSLSFTQG. A helical membrane pass occupies residues 23 to 43; the sequence is FLLGQLSVVLLIGAFIKFFIF. The Cytoplasmic portion of the chain corresponds to 44 to 495; it reads GEAPPPPSRG…PVGTPGIPDN (452 aa). 4 disordered regions span residues 63–94, 269–320, 382–428, and 440–495; these read YSSV…PSTS, ASTE…SPKS, WPRM…EPEG, and GLGA…IPDN. Composition is skewed to polar residues over residues 65 to 74 and 82 to 94; these read SVYSPPQDSQ and STSN…PSTS. Residues 128–379 enclose the SMP-LTD domain; that stretch reads QPESLDWFNV…EPRVQVVGLP (252 aa). Pro residues predominate over residues 271 to 289; that stretch reads TEPPEPLQTPAGSPAPPTS. Residues 418–428 show a composition bias toward basic and acidic residues; sequence FSDDHGREPEG. The segment covering 458 to 469 has biased composition (polar residues); that stretch reads RSSSMTRQQSGG.

Belongs to the MMM1 family. As to quaternary structure, homodimer. Component of the ER-mitochondria encounter structure (ERMES) or MDM complex, composed of mmm1, mdm10, mdm12 and mdm34. An MMM1 homodimer associates with one molecule of mdm12 on each side in a pairwise head-to-tail manner, and the SMP-LTD domains of mmm1 and mdm12 generate a continuous hydrophobic tunnel for phospholipid trafficking.

The protein resides in the endoplasmic reticulum membrane. Functionally, component of the ERMES/MDM complex, which serves as a molecular tether to connect the endoplasmic reticulum (ER) and mitochondria. Components of this complex are involved in the control of mitochondrial shape and protein biogenesis, and function in nonvesicular lipid trafficking between the ER and mitochondria. The mdm12-mmm1 subcomplex functions in the major beta-barrel assembly pathway that is responsible for biogenesis of all outer membrane beta-barrel proteins, and acts in a late step after the SAM complex. The mdm10-mdm12-mmm1 subcomplex further acts in the TOM40-specific pathway after the action of the mdm12-mmm1 complex. Essential for establishing and maintaining the structure of mitochondria and maintenance of mtDNA nucleoids. This is Maintenance of mitochondrial morphology protein 1 from Penicillium rubens (strain ATCC 28089 / DSM 1075 / NRRL 1951 / Wisconsin 54-1255) (Penicillium chrysogenum).